Consider the following 182-residue polypeptide: Large ribosomal subunit protein uL5 (182 aa).

Belongs to the universal ribosomal protein uL5 family. Part of the 50S ribosomal subunit; part of the 5S rRNA/L5/L18/L25 subcomplex. Contacts the 5S rRNA and the P site tRNA. Forms a bridge to the 30S subunit in the 70S ribosome.

In terms of biological role, this is one of the proteins that bind and probably mediate the attachment of the 5S RNA into the large ribosomal subunit, where it forms part of the central protuberance. In the 70S ribosome it contacts protein S13 of the 30S subunit (bridge B1b), connecting the 2 subunits; this bridge is implicated in subunit movement. Contacts the P site tRNA; the 5S rRNA and some of its associated proteins might help stabilize positioning of ribosome-bound tRNAs. The protein is Large ribosomal subunit protein uL5 of Borrelia duttonii (strain Ly).